A 262-amino-acid chain; its full sequence is MTKKIAMIHPTAIVHENAIIGKDVEIGPYTIIGDRVEIGDNCWIAPHVVIKGPTKMGKGNKIYQFASIGEDCQDLKYNGEETFLEIGDNNVFRESCTVHRGTAQDQGTTRIGNNNLLMAYVHVAHDCVLGNNIILSNNATLAGHTKLANNVIIGGLSALHQFTRVGEFAMIGGCSAVNKDIPPYFMATGNYVEAQGVNSVGLKRSGFNSKAIMEIKRAYKILCREGNSLEQAKIKIAEKLEGCPELQVLYDFICEESRGIVR.

The protein belongs to the transferase hexapeptide repeat family. LpxA subfamily. Homotrimer.

It localises to the cytoplasm. It catalyses the reaction a (3R)-hydroxyacyl-[ACP] + UDP-N-acetyl-alpha-D-glucosamine = a UDP-3-O-[(3R)-3-hydroxyacyl]-N-acetyl-alpha-D-glucosamine + holo-[ACP]. The protein operates within glycolipid biosynthesis; lipid IV(A) biosynthesis; lipid IV(A) from (3R)-3-hydroxytetradecanoyl-[acyl-carrier-protein] and UDP-N-acetyl-alpha-D-glucosamine: step 1/6. In terms of biological role, involved in the biosynthesis of lipid A, a phosphorylated glycolipid that anchors the lipopolysaccharide to the outer membrane of the cell. This chain is Acyl-[acyl-carrier-protein]--UDP-N-acetylglucosamine O-acyltransferase, found in Psychromonas ingrahamii (strain DSM 17664 / CCUG 51855 / 37).